A 436-amino-acid chain; its full sequence is Serine/threonine-protein kinase STK11 (436 aa).

Serine 31 carries the post-translational modification Phosphoserine. N6-acetyllysine occurs at positions 44 and 48. The tract at residues 45–90 (LIGKYLMGDLLGEGSYGKVKEVLDSETLCRRAVKILKKKKLRRIPN) is sufficient for interaction with SIRT1. Positions 49–309 (YLMGDLLGEG…IRQIRQHSWF (261 aa)) constitute a Protein kinase domain. ATP is bound by residues 55 to 63 (LGEGSYGKV) and lysine 78. An N6-acetyllysine mark is found at lysine 96 and lysine 97. The active-site Proton acceptor is aspartate 176. Threonine 189 carries the phosphothreonine; by autocatalysis modification. An N6-acetyllysine mark is found at lysine 296 and lysine 311. At serine 325 the chain carries Phosphoserine. Threonine 336 is modified (phosphothreonine; by autocatalysis). Threonine 366 carries the post-translational modification Phosphothreonine; by ATM and autocatalysis. Positions 397–421 (GTEPQLSSKVKPEGRPGAANPARKV) are disordered. Serine 403 bears the Phosphoserine mark. The residue at position 420 (lysine 420) is an N6-acetyllysine. Cysteine 422 carries the S-palmitoyl cysteine lipid modification. An N6-acetyllysine modification is found at lysine 426. Serine 431 is modified (phosphoserine; by autocatalysis, PKA, PKC/PRKCZ and RPS6KA1). Residue cysteine 433 is modified to Cysteine methyl ester. The S-farnesyl cysteine moiety is linked to residue cysteine 433. An N6-acetyllysine modification is found at lysine 434. Residues 434 to 436 (KQQ) constitute a propeptide, removed in mature form.

It belongs to the protein kinase superfamily. CAMK Ser/Thr protein kinase family. LKB1 subfamily. As to quaternary structure, catalytic component of a trimeric complex composed of STK11/LKB1, STRAD (STRADA or STRADB) and CAB39/MO25 (CAB39/MO25alpha or CAB39L/MO25beta): the complex tethers STK11/LKB1 in the cytoplasm and stimulates its catalytic activity. Found in a ternary complex composed of SMAD4, STK11/LKB1 and STK11IP. Interacts with NR4A1, p53/TP53, SMAD4, STK11IP and WDR6. Interacts with NISCH; this interaction may increase STK11 activity. Interacts with SIRT1; the interaction deacetylates STK11. Interacts with CDKN1A. Mg(2+) serves as cofactor. Mn(2+) is required as a cofactor. In terms of processing, phosphorylated by ATM at Thr-366 following ionizing radiation (IR). Phosphorylation at Ser-431 by RPS6KA1 and/or some PKA is required to inhibit cell growth. Phosphorylation at Ser-431 is also required during neuronal polarization to mediate phosphorylation of BRSK1 and BRSK2. Phosphorylation by PKC/PRKCZ at Ser-397 in isoform 2 promotes metformin (or peroxynitrite)-induced nuclear export of STK11 and activation of AMPK. UV radiation -induced phosphorylation at Thr-366 mediates CDKN1A degradation. Acetylated. Deacetylation at Lys-48 enhances cytoplasmic localization and kinase activity in vitro. Expressed in brain, heart, testis, skeletal muscle and spleen, and weakly in liver and kidney. Isoform 1 is expressed at highest levels in the brain. Isoform 2 is expressed at highest levels in the testis, primarily in postmitotic developing germ cells (at protein level).

The protein localises to the nucleus. It is found in the cytoplasm. Its subcellular location is the membrane. It localises to the mitochondrion. The enzyme catalyses L-seryl-[protein] + ATP = O-phospho-L-seryl-[protein] + ADP + H(+). It carries out the reaction L-threonyl-[protein] + ATP = O-phospho-L-threonyl-[protein] + ADP + H(+). With respect to regulation, activated by forming a complex with STRAD (STRADA or STRADB) and CAB39/MO25 (CAB39/MO25alpha or CAB39L/MO25beta): STRADA (or STRADB)-binding promotes a conformational change of STK11/LKB1 in an active conformation, which is stabilized by CAB39/MO25alpha (or CAB39L/MO25beta) interacting with the STK11/LKB1 activation loop. Sequestration in the nucleus by NR4A1 prevents it from phosphorylating and activating cytoplasmic AMPK. Functionally, tumor suppressor serine/threonine-protein kinase that controls the activity of AMP-activated protein kinase (AMPK) family members, thereby playing a role in various processes such as cell metabolism, cell polarity, apoptosis and DNA damage response. Acts by phosphorylating the T-loop of AMPK family proteins, thus promoting their activity: phosphorylates PRKAA1, PRKAA2, BRSK1, BRSK2, MARK1, MARK2, MARK3, MARK4, NUAK1, NUAK2, SIK1, SIK2, SIK3 and SNRK but not MELK. Also phosphorylates non-AMPK family proteins such as STRADA, PTEN and possibly p53/TP53. Acts as a key upstream regulator of AMPK by mediating phosphorylation and activation of AMPK catalytic subunits PRKAA1 and PRKAA2 and thereby regulates processes including: inhibition of signaling pathways that promote cell growth and proliferation when energy levels are low, glucose homeostasis in liver, activation of autophagy when cells undergo nutrient deprivation, and B-cell differentiation in the germinal center in response to DNA damage. Also acts as a regulator of cellular polarity by remodeling the actin cytoskeleton. Required for cortical neuron polarization by mediating phosphorylation and activation of BRSK1 and BRSK2, leading to axon initiation and specification. Involved in DNA damage response: interacts with p53/TP53 and recruited to the CDKN1A/WAF1 promoter to participate in transcription activation. Able to phosphorylate p53/TP53; the relevance of such result in vivo is however unclear and phosphorylation may be indirect and mediated by downstream STK11/LKB1 kinase NUAK1. Also acts as a mediator of p53/TP53-dependent apoptosis via interaction with p53/TP53: translocates to the mitochondrion during apoptosis and regulates p53/TP53-dependent apoptosis pathways. Regulates UV radiation-induced DNA damage response mediated by CDKN1A. In association with NUAK1, phosphorylates CDKN1A in response to UV radiation and contributes to its degradation which is necessary for optimal DNA repair. Has a role in spermiogenesis. In Rattus norvegicus (Rat), this protein is Serine/threonine-protein kinase STK11.